The sequence spans 1430 residues: Transport and Golgi organization protein 1 (1430 aa).

The first 34 residues, 1–34 (MRLTNEKATMQPQLSDLALVLGLLICCLPTLTWA), serve as a signal peptide directing secretion. The Extracellular segment spans residues 35-796 (ATLSDKRLCA…ADKLVDHSQL (762 aa)). One can recognise an SH3 domain in the interval 50 to 112 (QIISMGIAKI…NKDFIMEKKI (63 aa)). Disordered stretches follow at residues 253-272 (QEEPKAQQPATEAEKPPPLP), 284-303 (DFDYGDDETDDDSQQGSQDN), 318-362 (ESIE…SLPT), 445-524 (SDAE…DQQK), and 568-673 (EEAE…TDNH). The span at 284-296 (DFDYGDDETDDDS) shows a compositional bias: acidic residues. Basic and acidic residues-rich tracts occupy residues 331–357 (KKTDKVEDSKDETKEKHAEMEVSKQED), 497–524 (LQEEQEKQRLVAEAEEQKRLQEEADQQK), and 568–588 (EEAEKQKRLHEESEQLQRSSE). Positions 494–620 (YKQLQEEQEK…QSNEIVDNNN (127 aa)) form a coiled coil. Residues 594 to 621 (LSVQEANMQQLNDSVDSQSNEIVDNNNR) show a composition bias toward polar residues. Residues 640–651 (HPSTASHTTPTP) show a composition bias toward low complexity. The helical transmembrane segment at 797–817 (LLCVVIAAISSLFFMFAYYCF) threads the bilayer. Residues 818 to 1430 (CNSSQEGALL…SATSRPYSEV (613 aa)) are Cytoplasmic-facing. Phosphoserine is present on residues S865 and S868. A coiled-coil region spans residues 869–1245 (NDMVADLKKQ…SLRRKLTTMA (377 aa)). Residues 1105–1114 (SQLQQSSQDV) show a composition bias toward low complexity. Disordered stretches follow at residues 1105 to 1126 (SQLQQSSQDVEQLKQDFNQSER) and 1312 to 1430 (LPPT…YSEV). Over residues 1115–1126 (EQLKQDFNQSER) the composition is skewed to basic and acidic residues. Residues 1321 to 1334 (RPPPLGRMRSPPPS) show a composition bias toward pro residues. The segment covering 1336-1346 (RGDRDRERYSD) has biased composition (basic and acidic residues). A phosphoserine mark is found at S1345 and S1348. Acidic residues predominate over residues 1348-1361 (SDYDDYDDDEEDDR). A compositionally biased stretch (basic residues) spans 1364–1380 (DRRRRHSGSWGRRHRGS). Residues 1387-1402 (TYRSLSPSDSRYNYND) are compositionally biased toward polar residues. S1390 and S1392 each carry phosphoserine. Over residues 1408–1417 (SPPPSPPPVP) the composition is skewed to pro residues. Residues 1420-1430 (RSATSRPYSEV) are compositionally biased toward polar residues.

Belongs to the MIA/OTOR family. Tango1 subfamily.

The protein localises to the golgi apparatus membrane. The protein resides in the golgi apparatus. It is found in the trans-Golgi network. Functionally, required for protein secretion. May participate in cargo loading by binding to COPII coat subunits and guiding SH3-bound proteins into a growing carrier. At basal transitional ER sites in follicle epithelial cells, mediates the exit of basal membrane protein such as vkg, LanB1 and Trol, from the endoplasmic reticulum (ER) to basal Golgi clusters. The polypeptide is Transport and Golgi organization protein 1 (Drosophila melanogaster (Fruit fly)).